The primary structure comprises 161 residues: Small ribosomal subunit protein uS9 (161 aa).

2 disordered regions span residues 1–27 and 142–161; these read MAQI…APKA and KERK…FSKR.

Belongs to the universal ribosomal protein uS9 family.

The protein is Small ribosomal subunit protein uS9 of Clavibacter michiganensis subsp. michiganensis (strain NCPPB 382).